A 252-amino-acid chain; its full sequence is Neurovirulence factor ICP34.5 (252 aa).

Basic residues predominate over residues 1–15 (MARRRRRHRGPRRPR). The segment at 1–17 (MARRRRRHRGPRRPRPP) is required for nucleolar localization. Disordered regions lie at residues 1–129 (MARR…PFRL) and 150–179 (RRAG…PATP). Positions 25 to 36 (TAQSQVTSTPNS) are enriched in polar residues. Residues 46 to 59 (AAPPPPPAGGPPPS) are compositionally biased toward pro residues. Positions 74–84 (ASDDDDDDDWP) are enriched in acidic residues. Composition is skewed to pro residues over residues 85–94 (DSPPPEPAPE) and 120–129 (SHPPSRPFRL). The short motif at 129–138 (LPPRLALRLR) is the Nuclear export signal element. A run of 6 repeats spans residues 162 to 164 (ATP), 165 to 167 (ATP), 168 to 170 (ATP), 171 to 173 (ATP), 174 to 176 (ATP), and 177 to 179 (ATP). The tract at residues 162–179 (ATPATPATPATPATPATP) is 6 X 3 AA tandem repeats of A-T-P. Residues 165 to 179 (ATPATPATPATPATP) show a composition bias toward low complexity. Residues 179-192 (PARVRFSPHVRVRH) form a binding to PP1CA region. The tract at residues 179-192 (PARVRFSPHVRVRH) is interaction with host PPP1CA. Residues 194-252 (VVWASAARLARRGSWARERADRARFRRRVAEAEAVIGPCLGPKARARALARGAGPANSV) form an important for interferon resistance region. The Bipartite nuclear localization signal signature appears at 204-222 (RRGSWARERADRARFRRRV). Residues 222-237 (VAEAEAVIGPCLGPKA) form an interaction with host EIF2S1/EIF-2ALPHA region.

Belongs to the PPP1R15 family. Interacts with host PPP1CA to form a high-molecular-weight complex that dephosphorylates EIF2S1/eIF-2alpha. Interacts with host EIF2S1/eIF-2alpha; this interaction is crucial for the specific dephosphorylation of EIF2S1/eIF-2alpha by PPP1CA. Binds to proliferating cell nuclear antigen (PCNA), which may release host cells from growth arrest and facilitate viral replication. Interacts (via N-terminus) with host C1QBP and PRKCA. Interacts with protein UL31. Interacts with host TBK1. Interacts with host STING/TMEM173; this interaction inhibits the intracellular DNA sensing pathway. Interacts with host BECN1; this interaction modulates host autophagy.

It is found in the host cytoplasm. The protein resides in the host nucleus. Its subcellular location is the host nucleolus. It localises to the virion. Its function is as follows. Inhibits the establishment of the immune response and of the integrated stress response (ISR) in the infected cell. Plays essential roles in viral nuclear egress to mediate capsid transit across the nuclear membrane. Facilitates nuclear egress cooperatively with host C1QBP and protein kinase C/PKC to induce lamin A/C phosphorylation and subsequent reorganization. In turn, lamina disassembles and nuclear egress occurs. Recruits the serine/threonine protein phosphatase PPP1CA/PP1-alpha to dephosphorylate the translation initiation factor EIF2S1/eIF-2alpha, thereby couteracting the host shutoff of protein synthesis involving double-stranded RNA-dependent protein kinase EIF2AK2/PKR. In turn, controls host IRF3 activation and subsequently inhibits host interferon response. Controls the DNA sensing pathway by interacting with and inhibiting host STING/TMEM173. Also down-modulates the host MHC class II proteins cell surface expression. Acts as a neurovirulence factor that has a profound effect on the growth of the virus in central nervous system tissue, by interacting with host BECN1 and thereby antagonizing the host autophagy response. The chain is Neurovirulence factor ICP34.5 (RL1) from Human herpesvirus 1 (strain CVG-2) (HHV-1).